We begin with the raw amino-acid sequence, 227 residues long: 7-cyano-7-deazaguanine synthase (227 aa).

8–18 (FSGGQDSTTCL) is a binding site for ATP. Residues cysteine 187, cysteine 196, cysteine 199, and cysteine 202 each contribute to the Zn(2+) site.

Belongs to the QueC family. Requires Zn(2+) as cofactor.

The catalysed reaction is 7-carboxy-7-deazaguanine + NH4(+) + ATP = 7-cyano-7-deazaguanine + ADP + phosphate + H2O + H(+). Its pathway is purine metabolism; 7-cyano-7-deazaguanine biosynthesis. Catalyzes the ATP-dependent conversion of 7-carboxy-7-deazaguanine (CDG) to 7-cyano-7-deazaguanine (preQ(0)). The sequence is that of 7-cyano-7-deazaguanine synthase from Shewanella pealeana (strain ATCC 700345 / ANG-SQ1).